Reading from the N-terminus, the 371-residue chain is Chaperone protein DnaJ (371 aa).

A J domain is found at 5–69; that stretch reads DYYEVLGLSK…QKRAQYDQFG (65 aa). The CR-type zinc-finger motif lies at 133 to 215; it reads GKELNVEIPV…CHGSGKVRKR (83 aa). Residues C146, C149, C163, C166, C189, C192, C203, and C206 each contribute to the Zn(2+) site. CXXCXGXG motif repeat units follow at residues 146 to 153, 163 to 170, 189 to 196, and 203 to 210; these read CDTCKGSG, CKHCSGSG, CSHCSGTG, and CTTCHGSG.

It belongs to the DnaJ family. In terms of assembly, homodimer. Requires Zn(2+) as cofactor.

It is found in the cytoplasm. Participates actively in the response to hyperosmotic and heat shock by preventing the aggregation of stress-denatured proteins and by disaggregating proteins, also in an autonomous, DnaK-independent fashion. Unfolded proteins bind initially to DnaJ; upon interaction with the DnaJ-bound protein, DnaK hydrolyzes its bound ATP, resulting in the formation of a stable complex. GrpE releases ADP from DnaK; ATP binding to DnaK triggers the release of the substrate protein, thus completing the reaction cycle. Several rounds of ATP-dependent interactions between DnaJ, DnaK and GrpE are required for fully efficient folding. Also involved, together with DnaK and GrpE, in the DNA replication of plasmids through activation of initiation proteins. In Bacillus cereus (strain AH820), this protein is Chaperone protein DnaJ.